A 318-amino-acid chain; its full sequence is Ferrochelatase (318 aa).

Residues histidine 186 and glutamate 264 each contribute to the Fe cation site.

This sequence belongs to the ferrochelatase family.

Its subcellular location is the cytoplasm. The enzyme catalyses heme b + 2 H(+) = protoporphyrin IX + Fe(2+). The protein operates within porphyrin-containing compound metabolism; protoheme biosynthesis; protoheme from protoporphyrin-IX: step 1/1. Catalyzes the ferrous insertion into protoporphyrin IX. This is Ferrochelatase from Chlamydia abortus (strain DSM 27085 / S26/3) (Chlamydophila abortus).